Reading from the N-terminus, the 142-residue chain is Glutamate-rich protein 2 (142 aa).

Disordered regions lie at residues 1–55 and 104–142; these read MSKN…HAPL and EKAQ…CEDG. Positions 9-27 are enriched in basic and acidic residues; it reads EQEKNNEHCPEDINDKLSE. Over residues 28–43 the composition is skewed to acidic residues; the sequence is STDDDGEDTSDEDKEE. The span at 44–53 shows a compositional bias: basic and acidic residues; sequence DSNPNKDTHA. Over residues 109–142 the composition is skewed to acidic residues; sequence LEEDDDESEEDNSESEGESTEDPSEESSDECEDG.

This chain is Glutamate-rich protein 2 (ERICH2), found in Bos taurus (Bovine).